Consider the following 285-residue polypeptide: Methanethiol S-methyltransferase 1 (285 aa).

Helical transmembrane passes span 55 to 75 (AYLVFFVTILYAIGFVMGLVV), 88 to 108 (AEAVIINLLLMALFAVQHSVM), 132 to 152 (LFASLSLLLLFWQWRPLPTVI), 162 to 182 (VTLVTVSFAGWVLVFTSTFII), and 224 to 244 (FIVAFWAAPVMTAGHLLFAAV).

This sequence belongs to the nurim family.

It localises to the membrane. The catalysed reaction is methanethiol + S-adenosyl-L-methionine = dimethyl sulfide + S-adenosyl-L-homocysteine + H(+). Catalyzes the methylation of methanethiol (MeSH) to yield dimethylsulphide (DMS). The protein is Methanethiol S-methyltransferase 1 of Bradyrhizobium diazoefficiens (strain JCM 10833 / BCRC 13528 / IAM 13628 / NBRC 14792 / USDA 110).